Consider the following 316-residue polypeptide: Annexin A13 (316 aa).

The N-myristoyl glycine moiety is linked to residue Gly-2. Annexin repeat units follow at residues 14–85 (FDVD…ALLD), 86–157 (RPSE…SLLQ), 169–241 (DLAG…TLVR), and 245–316 (DCED…ALLH).

This sequence belongs to the annexin family. In terms of assembly, monomer and homodimer. In terms of tissue distribution, detected in epithelial cells in colon and jejunum (at protein level). Detected in epithelial cells in jejunum.

It localises to the apical cell membrane. It is found in the cell membrane. Its subcellular location is the cytoplasmic vesicle. Binds to membranes enriched in phosphatidylserine or phosphatidylglycerol in a calcium-dependent manner. Half-maximal membrane binding requires about 60 uM calcium. Does not bind to membranes that lack phospholipids with an acidic headgroup. Functionally, binds to membranes enriched in phosphatidylserine or phosphatidylglycerol in a calcium-dependent manner, but requires higher calcium levels for membrane binding than isoform A. Half-maximal membrane binding requires about 320 uM calcium. In Homo sapiens (Human), this protein is Annexin A13 (ANXA13).